Consider the following 274-residue polypeptide: Nitrogenase iron protein (274 aa).

An ATP-binding site is contributed by 8 to 15 (GKGGIGKS). Cysteine 94 lines the [4Fe-4S] cluster pocket. Arginine 97 carries the ADP-ribosylarginine; by dinitrogenase reductase ADP-ribosyltransferase modification. Cysteine 131 contributes to the [4Fe-4S] cluster binding site.

The protein belongs to the NifH/BchL/ChlL family. In terms of assembly, homodimer. The cofactor is [4Fe-4S] cluster. The reversible ADP-ribosylation of Arg-97 inactivates the nitrogenase reductase and regulates nitrogenase activity.

It carries out the reaction N2 + 8 reduced [2Fe-2S]-[ferredoxin] + 16 ATP + 16 H2O = H2 + 8 oxidized [2Fe-2S]-[ferredoxin] + 2 NH4(+) + 16 ADP + 16 phosphate + 6 H(+). Functionally, the key enzymatic reactions in nitrogen fixation are catalyzed by the nitrogenase complex, which has 2 components: the iron protein and the molybdenum-iron protein. In Chlorobium phaeobacteroides (strain DSM 266 / SMG 266 / 2430), this protein is Nitrogenase iron protein.